The chain runs to 219 residues: Thiamine-phosphate synthase (219 aa).

4-amino-2-methyl-5-(diphosphooxymethyl)pyrimidine contacts are provided by residues 44–48 (QFREK) and Asn79. Positions 80 and 99 each coordinate Mg(2+). Residue Ser117 participates in 4-amino-2-methyl-5-(diphosphooxymethyl)pyrimidine binding. Position 143–145 (143–145 (TST)) interacts with 2-[(2R,5Z)-2-carboxy-4-methylthiazol-5(2H)-ylidene]ethyl phosphate. Lys146 serves as a coordination point for 4-amino-2-methyl-5-(diphosphooxymethyl)pyrimidine. 2-[(2R,5Z)-2-carboxy-4-methylthiazol-5(2H)-ylidene]ethyl phosphate contacts are provided by residues Gly175 and 195-196 (IS).

Belongs to the thiamine-phosphate synthase family. Mg(2+) serves as cofactor.

It carries out the reaction 2-[(2R,5Z)-2-carboxy-4-methylthiazol-5(2H)-ylidene]ethyl phosphate + 4-amino-2-methyl-5-(diphosphooxymethyl)pyrimidine + 2 H(+) = thiamine phosphate + CO2 + diphosphate. The catalysed reaction is 2-(2-carboxy-4-methylthiazol-5-yl)ethyl phosphate + 4-amino-2-methyl-5-(diphosphooxymethyl)pyrimidine + 2 H(+) = thiamine phosphate + CO2 + diphosphate. It catalyses the reaction 4-methyl-5-(2-phosphooxyethyl)-thiazole + 4-amino-2-methyl-5-(diphosphooxymethyl)pyrimidine + H(+) = thiamine phosphate + diphosphate. The protein operates within cofactor biosynthesis; thiamine diphosphate biosynthesis; thiamine phosphate from 4-amino-2-methyl-5-diphosphomethylpyrimidine and 4-methyl-5-(2-phosphoethyl)-thiazole: step 1/1. Its function is as follows. Condenses 4-methyl-5-(beta-hydroxyethyl)thiazole monophosphate (THZ-P) and 2-methyl-4-amino-5-hydroxymethyl pyrimidine pyrophosphate (HMP-PP) to form thiamine monophosphate (TMP). This chain is Thiamine-phosphate synthase, found in Bacillus cereus (strain B4264).